We begin with the raw amino-acid sequence, 167 residues long: Ureidoglycolate lyase (167 aa).

This sequence belongs to the ureidoglycolate lyase family. As to quaternary structure, homodimer. Ni(2+) serves as cofactor.

It carries out the reaction (S)-ureidoglycolate = urea + glyoxylate. It participates in nitrogen metabolism; (S)-allantoin degradation. In terms of biological role, catalyzes the catabolism of the allantoin degradation intermediate (S)-ureidoglycolate, generating urea and glyoxylate. Involved in the utilization of allantoin as nitrogen source. This chain is Ureidoglycolate lyase, found in Pseudomonas fluorescens (strain ATCC BAA-477 / NRRL B-23932 / Pf-5).